Here is a 942-residue protein sequence, read N- to C-terminus: Apolipoprotein B receptor (942 aa).

5 disordered regions span residues 66–212 (GLRS…VTED), 240–269 (ERMV…QAML), 283–487 (DSLG…SPER), 501–607 (AGPE…VPWE), and 671–942 (EGRG…PKPQ). 5 stretches are compositionally biased toward basic and acidic residues: residues 106-123 (QAER…DARG), 132-143 (PEAEPGTHRDRS), 240-252 (ERMV…ERAR), 312-330 (EADK…EAEV), and 338-352 (EAER…HIAE). Acidic residues predominate over residues 353–370 (EEAMGEQETEGSFEDEER). S364 is modified (phosphoserine). Over residues 384 to 397 (EEVRAEESSREKRN) the composition is skewed to basic and acidic residues. The segment covering 415–425 (PDWEDSPEVST) has biased composition (acidic residues). 2 stretches are compositionally biased toward basic and acidic residues: residues 444 to 458 (LRVK…ELVR) and 466 to 475 (QLEEGQKGQE). Phosphoserine is present on residues S484 and S520. Basic and acidic residues-rich tracts occupy residues 514–531 (GVDR…EAGK) and 672–687 (GRGE…ETTE). Residues 709 to 721 (QEIDGTEEGEQAE) show a composition bias toward acidic residues. A compositionally biased stretch (low complexity) spans 837-853 (SRLDVSVPRSRVLLSRS). Over residues 854-863 (SSRRRSRPSF) the composition is skewed to basic residues.

Homodimer. In terms of processing, there are 2 forms in macrophages, the membrane-binding proteins 200 kDa (MBP 200) and 235 kDa (MBP 235), that can be reduced into a single active ligand-binding species with intermediate mobility (MBP 200R). In terms of tissue distribution, highly expressed in spleen, lung and skeletal muscle, and weakly in brain, heart, kidney, and testis.

The protein resides in the cell membrane. In terms of biological role, macrophage receptor that binds to the apolipoprotein B48 (APOB) of dietary triglyceride (TG)-rich lipoproteins (TRL) or to a like domain of APOB in hypertriglyceridemic very low density lipoprotein (HTG-VLDL). Binds and internalizes TRL when out of the context of the macrophage. May provide essential lipids to reticuloendothelial cells. Could also be involved in foam cell formation with elevated TRL and remnant lipoprotein (RLP). Mediates the rapid high-affinity uptake of chylomicrons (CM), HTG-VLDL, and trypsinized (tryp) VLDL devoid of APOE in vitro in macrophages. The chain is Apolipoprotein B receptor from Mus musculus (Mouse).